The chain runs to 617 residues: V-type proton ATPase catalytic subunit A (617 aa).

ATP is bound at residue 257 to 264 (GAFGCGKT).

The protein belongs to the ATPase alpha/beta chains family. V-ATPase is a heteromultimeric enzyme composed of a peripheral catalytic V1 complex (components A to H) attached to an integral membrane V0 proton pore complex (components: a, c, c', c'', d, e, f and VOA1). In terms of processing, is a probable target for sumoylation.

It is found in the vacuole membrane. The catalysed reaction is ATP + H2O + 4 H(+)(in) = ADP + phosphate + 5 H(+)(out). Functionally, catalytic subunit of the V1 complex of vacuolar(H+)-ATPase (V-ATPase), a multisubunit enzyme composed of a peripheral complex (V1) that hydrolyzes ATP and a membrane integral complex (V0) that translocates protons. V-ATPase is responsible for acidifying and maintaining the pH of intracellular compartments. Mediates oxidative stress response, filamentous growth, and plays an important role in virulence. This is V-type proton ATPase catalytic subunit A from Candida albicans (strain SC5314 / ATCC MYA-2876) (Yeast).